Consider the following 697-residue polypeptide: DNA ligase (697 aa).

NAD(+) contacts are provided by residues 41 to 45, 90 to 91, and Glu-129; these read DPVYD and SL. Lys-131 serves as the catalytic N6-AMP-lysine intermediate. Arg-152, Glu-189, Lys-308, and Lys-332 together coordinate NAD(+). Residues Cys-426, Cys-429, Cys-444, and Cys-449 each coordinate Zn(2+). Positions 617-697 constitute a BRCT domain; sequence AANHHLTGST…ALQNMLRGST (81 aa).

It belongs to the NAD-dependent DNA ligase family. LigA subfamily. Mg(2+) is required as a cofactor. It depends on Mn(2+) as a cofactor.

The enzyme catalyses NAD(+) + (deoxyribonucleotide)n-3'-hydroxyl + 5'-phospho-(deoxyribonucleotide)m = (deoxyribonucleotide)n+m + AMP + beta-nicotinamide D-nucleotide.. Its function is as follows. DNA ligase that catalyzes the formation of phosphodiester linkages between 5'-phosphoryl and 3'-hydroxyl groups in double-stranded DNA using NAD as a coenzyme and as the energy source for the reaction. It is essential for DNA replication and repair of damaged DNA. The sequence is that of DNA ligase from Synechococcus sp. (strain CC9311).